Here is a 901-residue protein sequence, read N- to C-terminus: Bifunctional protein STORR (901 aa).

The helical transmembrane segment at 12–32 threads the bilayer; it reads TSSVVALLLALVSILSSVVVL. Position 513 (cysteine 513) interacts with heme.

This sequence in the N-terminal section; belongs to the cytochrome P450 family. It in the C-terminal section; belongs to the aldo/keto reductase family. It depends on heme as a cofactor.

It localises to the membrane. The enzyme catalyses (R)-reticuline + NADP(+) = 1,2-dehydroreticuline + NADPH + H(+). It catalyses the reaction (S)-reticuline + reduced [NADPH--hemoprotein reductase] + O2 = 1,2-dehydroreticuline + oxidized [NADPH--hemoprotein reductase] + 2 H2O + H(+). It functions in the pathway alkaloid biosynthesis; morphine biosynthesis. Its function is as follows. Bifunctional protein involved in the biosynthesis of morphinan-type benzylisoquinoline alkaloids. Required for the isomerization of (S)- to (R)-reticuline. The cytochrome P450 module is responsible for the conversion of (S)-reticuline to 1,2-dehydroreticuline while the oxidoreductase module converts 1,2-dehydroreticuline to (R)-reticuline. This Papaver somniferum (Opium poppy) protein is Bifunctional protein STORR.